A 20-amino-acid polypeptide reads, in one-letter code: L-amino-acid oxidase L2 (20 aa).

Belongs to the flavin monoamine oxidase family. FIG1 subfamily. Monomer. This is in contrast with most of its orthologs, that are non-covalently linked homodimers. Requires FAD as cofactor. Post-translationally, N-glycosylated. Expressed by the venom gland.

It localises to the secreted. The catalysed reaction is an L-alpha-amino acid + O2 + H2O = a 2-oxocarboxylate + H2O2 + NH4(+). It catalyses the reaction L-leucine + O2 + H2O = 4-methyl-2-oxopentanoate + H2O2 + NH4(+). The enzyme catalyses L-phenylalanine + O2 + H2O = 3-phenylpyruvate + H2O2 + NH4(+). It carries out the reaction L-tryptophan + O2 + H2O = indole-3-pyruvate + H2O2 + NH4(+). The catalysed reaction is L-methionine + O2 + H2O = 4-methylsulfanyl-2-oxobutanoate + H2O2 + NH4(+). It catalyses the reaction L-isoleucine + O2 + H2O = (S)-3-methyl-2-oxopentanoate + H2O2 + NH4(+). The enzyme catalyses L-tyrosine + O2 + H2O = 3-(4-hydroxyphenyl)pyruvate + H2O2 + NH4(+). Its function is as follows. Catalyzes an oxidative deamination of predominantly hydrophobic and aromatic L-amino acids, thus producing hydrogen peroxide that may contribute to the diverse toxic effects of this enzyme. Is active on L-Ile, L-Leu, L-Met, L-Phe, L-Trp, and L-Tyr. Exhibits diverse biological activities, such as hemorrhage, hemolysis, edema, apoptosis of vascular endothelial cells or tumor cell lines, antibacterial and antiparasitic activities, as well as regulation of platelet aggregation. Its effect on platelets is controversial, since it either induces aggregation or inhibits agonist-induced aggregation. These different effects are probably due to different experimental conditions. In Daboia russelii (Russel's viper), this protein is L-amino-acid oxidase L2.